Reading from the N-terminus, the 180-residue chain is ATP-dependent Clp protease proteolytic subunit 2 (180 aa).

Ser86 (nucleophile) is an active-site residue. Residue His111 is part of the active site.

It belongs to the peptidase S14 family. Fourteen ClpP subunits assemble into 2 heptameric rings which stack back to back to give a disk-like structure with a central cavity, resembling the structure of eukaryotic proteasomes.

Its subcellular location is the cytoplasm. It carries out the reaction Hydrolysis of proteins to small peptides in the presence of ATP and magnesium. alpha-casein is the usual test substrate. In the absence of ATP, only oligopeptides shorter than five residues are hydrolyzed (such as succinyl-Leu-Tyr-|-NHMec, and Leu-Tyr-Leu-|-Tyr-Trp, in which cleavage of the -Tyr-|-Leu- and -Tyr-|-Trp bonds also occurs).. Its function is as follows. Cleaves peptides in various proteins in a process that requires ATP hydrolysis. Has a chymotrypsin-like activity. Plays a major role in the degradation of misfolded proteins. The chain is ATP-dependent Clp protease proteolytic subunit 2 from Tropheryma whipplei (strain Twist) (Whipple's bacillus).